The following is a 142-amino-acid chain: Large ribosomal subunit protein uL11 (142 aa).

It belongs to the universal ribosomal protein uL11 family. In terms of assembly, part of the ribosomal stalk of the 50S ribosomal subunit. Interacts with L10 and the large rRNA to form the base of the stalk. L10 forms an elongated spine to which L12 dimers bind in a sequential fashion forming a multimeric L10(L12)X complex. Post-translationally, one or more lysine residues are methylated.

Forms part of the ribosomal stalk which helps the ribosome interact with GTP-bound translation factors. In Xylella fastidiosa (strain Temecula1 / ATCC 700964), this protein is Large ribosomal subunit protein uL11.